The chain runs to 399 residues: Tryptophan synthase beta chain (399 aa).

Lysine 92 carries the N6-(pyridoxal phosphate)lysine modification.

The protein belongs to the TrpB family. Tetramer of two alpha and two beta chains. Pyridoxal 5'-phosphate serves as cofactor.

It catalyses the reaction (1S,2R)-1-C-(indol-3-yl)glycerol 3-phosphate + L-serine = D-glyceraldehyde 3-phosphate + L-tryptophan + H2O. It functions in the pathway amino-acid biosynthesis; L-tryptophan biosynthesis; L-tryptophan from chorismate: step 5/5. In terms of biological role, the beta subunit is responsible for the synthesis of L-tryptophan from indole and L-serine. The chain is Tryptophan synthase beta chain from Bordetella pertussis (strain Tohama I / ATCC BAA-589 / NCTC 13251).